The chain runs to 1071 residues: MKLIYTEMSYSMTEILVNEARKAADQGYRVFYIAPNSLSFEKEREVLTLLPERGTFSIIVTRFVQMSRYFTVESSPSKQHLDDTTLAMIFYRALMQLKPEDLPSYGRLQNNSVFIEQLVELYKELKNAQLSVHDLTGLDHPQKQEDLIKIIELAETIMIQQDYNQDSPLQSFARAIKLGLLNNQLSKTVIVIDGFSRFSAEEDYLLSLLNNNCQEVIIGSYVSQKAYQKSFIKGNIYEASLHFLQDLAQKYHIKPVFATSNQVFKPAFSRLTQLFEATHDFSQVDWQLQKNDLDHFSLWQCHHQKEEIEHVAKSIRQKLYEGYRYKDILVLLGDMDAYQLQIGPIFDKFEIPYYLGKAEPMAAHPLVQFIESLERSQRYNWRREDILNMLKSGLFGCFDDSDIDRFEEYTQFADIKGFTKFSKPFTINSSRQYPLDFLNEMRQDIVLPLQELFKSQKQLGASLVDKLILFFKKIRLAENMQGLAQSQLEVEKNEEVWKRFTDILTSFHHIFGQEKLRLSDCLALIKTGMKSAQYRVVPATLDVVTIKSYDLVQPHSKPFVYAIGLTQSHFPKQIHHSGLLSDQERARINEIRNYRHFDIASAENSKKNHQTALSLFNAATKELVLSVPTVINETFDDLSPYLKELISFGLPLLDKGKNYLSYDNSDIGNYKALLSQIIAINRQDLIEMSDQDKMFWTVVLRYLRKQLRKQQLELPTSDYRLSTKPLSKEVIEVCFPKGIPLKLSATALTVFYNNQYNYFLKYVLNLNKTESIHPDSRIHGQYLHRVFERLMKDHTQEPFDNKLKQAIYHTNQESFFQQVYQDNAEAEYSLAILEDIVRSTAPILQLNQNIKVIDQEKNFHLDMGNEILVHGIIDRIDQLSDGSLGIVDYKSSANQFDIGTFYNGLSPQLVTYLAALKQIAPHDINQLFGAMYLHLQDPKLDLVTFKQIDNTLVESIYKALTYKGIFSEVEKEHLSTGAYQTKNALYSNDELETLLNYNKYLYLKAAKHIKKGHFLINPYTSDGKTVQGDQLKAITRFEADLDMAQARRLVTLPAKEKKECFLTLMRKESHL.

It belongs to the helicase family. AddB/RexB type 2 subfamily. In terms of assembly, heterodimer of AddA and RexB. Requires Mg(2+) as cofactor.

The heterodimer acts as both an ATP-dependent DNA helicase and an ATP-dependent, dual-direction single-stranded exonuclease. Recognizes the chi site generating a DNA molecule suitable for the initiation of homologous recombination. This subunit has 5' -&gt; 3' nuclease activity but not helicase activity. The polypeptide is ATP-dependent helicase/deoxyribonuclease subunit B (Streptococcus pyogenes serotype M28 (strain MGAS6180)).